Here is a 285-residue protein sequence, read N- to C-terminus: UDP-3-O-acyl-N-acetylglucosamine deacetylase (285 aa).

3 residues coordinate Zn(2+): His-89, His-243, and Asp-247. His-270 serves as the catalytic Proton donor.

It belongs to the LpxC family. Zn(2+) is required as a cofactor.

The catalysed reaction is a UDP-3-O-[(3R)-3-hydroxyacyl]-N-acetyl-alpha-D-glucosamine + H2O = a UDP-3-O-[(3R)-3-hydroxyacyl]-alpha-D-glucosamine + acetate. It functions in the pathway glycolipid biosynthesis; lipid IV(A) biosynthesis; lipid IV(A) from (3R)-3-hydroxytetradecanoyl-[acyl-carrier-protein] and UDP-N-acetyl-alpha-D-glucosamine: step 2/6. Functionally, catalyzes the hydrolysis of UDP-3-O-myristoyl-N-acetylglucosamine to form UDP-3-O-myristoylglucosamine and acetate, the committed step in lipid A biosynthesis. In Thermosynechococcus vestitus (strain NIES-2133 / IAM M-273 / BP-1), this protein is UDP-3-O-acyl-N-acetylglucosamine deacetylase.